Here is a 60-residue protein sequence, read N- to C-terminus: Small integral membrane protein 3 (60 aa).

The helical transmembrane segment at 20–40 threads the bilayer; sequence IWAIVLIILATVVIMTSLFLC.

It is found in the membrane. The chain is Small integral membrane protein 3 (Smim3) from Rattus norvegicus (Rat).